Reading from the N-terminus, the 203-residue chain is Large ribosomal subunit protein bL25 (203 aa).

It belongs to the bacterial ribosomal protein bL25 family. CTC subfamily. As to quaternary structure, part of the 50S ribosomal subunit; part of the 5S rRNA/L5/L18/L25 subcomplex. Contacts the 5S rRNA. Binds to the 5S rRNA independently of L5 and L18.

Functionally, this is one of the proteins that binds to the 5S RNA in the ribosome where it forms part of the central protuberance. This Rickettsia rickettsii (strain Iowa) protein is Large ribosomal subunit protein bL25.